Consider the following 232-residue polypeptide: MTRPQAILTDIEGTTSSISFVKDVLFPYARRAMPAYVREHGGHPQVRHWLNQVADEIGEDVPDEVLITTLQTWIDEDRKHTALKALQGMIWEDGYRTADFSAHIYTDAAIQLQAWHAEGIPLYVYSSGSVPAQKLFFAHSDAGDLSGLVSDWFDTEVGPKRESSSYRRIAERIGVPAPEILFLSDVIEELDAAKRAGMRTALLDRLEDYPTPRSADDVGSHQRVESFTQLVL.

It belongs to the HAD-like hydrolase superfamily. MasA/MtnC family. In terms of assembly, monomer. Mg(2+) is required as a cofactor.

The enzyme catalyses 5-methylsulfanyl-2,3-dioxopentyl phosphate + H2O = 1,2-dihydroxy-5-(methylsulfanyl)pent-1-en-3-one + phosphate. The protein operates within amino-acid biosynthesis; L-methionine biosynthesis via salvage pathway; L-methionine from S-methyl-5-thio-alpha-D-ribose 1-phosphate: step 3/6. It functions in the pathway amino-acid biosynthesis; L-methionine biosynthesis via salvage pathway; L-methionine from S-methyl-5-thio-alpha-D-ribose 1-phosphate: step 4/6. Functionally, bifunctional enzyme that catalyzes the enolization of 2,3-diketo-5-methylthiopentyl-1-phosphate (DK-MTP-1-P) into the intermediate 2-hydroxy-3-keto-5-methylthiopentenyl-1-phosphate (HK-MTPenyl-1-P), which is then dephosphorylated to form the acireductone 1,2-dihydroxy-3-keto-5-methylthiopentene (DHK-MTPene). This chain is Enolase-phosphatase E1, found in Xanthomonas campestris pv. campestris (strain 8004).